The chain runs to 90 residues: Small ribosomal subunit protein uS15c (90 aa).

The protein belongs to the universal ribosomal protein uS15 family. As to quaternary structure, part of the 30S ribosomal subunit.

The protein resides in the plastid. It localises to the chloroplast. This Lolium perenne (Perennial ryegrass) protein is Small ribosomal subunit protein uS15c (rps15-A).